The following is a 274-amino-acid chain: 2,3,4,5-tetrahydropyridine-2,6-dicarboxylate N-succinyltransferase (274 aa).

The protein belongs to the transferase hexapeptide repeat family.

It localises to the cytoplasm. The enzyme catalyses (S)-2,3,4,5-tetrahydrodipicolinate + succinyl-CoA + H2O = (S)-2-succinylamino-6-oxoheptanedioate + CoA. The protein operates within amino-acid biosynthesis; L-lysine biosynthesis via DAP pathway; LL-2,6-diaminopimelate from (S)-tetrahydrodipicolinate (succinylase route): step 1/3. This chain is 2,3,4,5-tetrahydropyridine-2,6-dicarboxylate N-succinyltransferase, found in Escherichia fergusonii (strain ATCC 35469 / DSM 13698 / CCUG 18766 / IAM 14443 / JCM 21226 / LMG 7866 / NBRC 102419 / NCTC 12128 / CDC 0568-73).